Consider the following 186-residue polypeptide: Peptidyl-tRNA hydrolase (186 aa).

Tyr-14 contacts tRNA. Residue His-19 is the Proton acceptor of the active site. The tRNA site is built by Tyr-64, Asn-66, and Asn-112.

It belongs to the PTH family. As to quaternary structure, monomer.

It localises to the cytoplasm. It catalyses the reaction an N-acyl-L-alpha-aminoacyl-tRNA + H2O = an N-acyl-L-amino acid + a tRNA + H(+). Functionally, hydrolyzes ribosome-free peptidyl-tRNAs (with 1 or more amino acids incorporated), which drop off the ribosome during protein synthesis, or as a result of ribosome stalling. In terms of biological role, catalyzes the release of premature peptidyl moieties from peptidyl-tRNA molecules trapped in stalled 50S ribosomal subunits, and thus maintains levels of free tRNAs and 50S ribosomes. The chain is Peptidyl-tRNA hydrolase from Geobacillus thermodenitrificans (strain NG80-2).